We begin with the raw amino-acid sequence, 215 residues long: Cytochrome b6 (215 aa).

Residues 32-52 traverse the membrane as a helical segment; that stretch reads IFYCLGGITLTCFLVQVASGF. Residue Cys-35 coordinates heme c. Heme b contacts are provided by His-86 and His-100. The next 3 helical transmembrane spans lie at 90 to 110, 116 to 136, and 186 to 206; these read ASMM…TGGF, LTWV…VTGY, and LHTF…FLMI. The heme b site is built by His-187 and His-202.

Belongs to the cytochrome b family. PetB subfamily. The 4 large subunits of the cytochrome b6-f complex are cytochrome b6, subunit IV (17 kDa polypeptide, PetD), cytochrome f and the Rieske protein, while the 4 small subunits are PetG, PetL, PetM and PetN. The complex functions as a dimer. The cofactor is heme b. Heme c is required as a cofactor.

It is found in the plastid. The protein resides in the chloroplast thylakoid membrane. Component of the cytochrome b6-f complex, which mediates electron transfer between photosystem II (PSII) and photosystem I (PSI), cyclic electron flow around PSI, and state transitions. The sequence is that of Cytochrome b6 from Anthoceros angustus (Hornwort).